The following is a 574-amino-acid chain: Septation ring formation regulator EzrA (574 aa).

Over 1-7 (MPTGTII) the chain is Extracellular. Residues 8–26 (LIVSIVIILIIAYVACLIV) form a helical membrane-spanning segment. Topologically, residues 27 to 574 (RKRNDNLLVA…YEKTREAIRY (548 aa)) are cytoplasmic. A coiled-coil region spans residues 105–189 (SAKNAIDSID…IEVEFSEFVM (85 aa)).

Belongs to the EzrA family.

It localises to the cell membrane. In terms of biological role, negative regulator of FtsZ ring formation; modulates the frequency and position of FtsZ ring formation. Inhibits FtsZ ring formation at polar sites. Interacts either with FtsZ or with one of its binding partners to promote depolymerization. The protein is Septation ring formation regulator EzrA of Streptococcus suis (strain 98HAH33).